Here is a 251-residue protein sequence, read N- to C-terminus: 5'-nucleotidase SurE (251 aa).

D8, D9, S39, and N91 together coordinate a divalent metal cation.

It belongs to the SurE nucleotidase family. It depends on a divalent metal cation as a cofactor.

The protein localises to the cytoplasm. The enzyme catalyses a ribonucleoside 5'-phosphate + H2O = a ribonucleoside + phosphate. Nucleotidase that shows phosphatase activity on nucleoside 5'-monophosphates. The polypeptide is 5'-nucleotidase SurE (Nitrosococcus oceani (strain ATCC 19707 / BCRC 17464 / JCM 30415 / NCIMB 11848 / C-107)).